A 653-amino-acid polypeptide reads, in one-letter code: Putative clathrin assembly protein At2g25430 (653 aa).

The 137-residue stretch at 23 to 159 (VASNMAPDLE…ELALFERKSG (137 aa)) folds into the ENTH domain. Over residues 160–171 (VSVNSGGNSSHH) the composition is skewed to low complexity. The tract at residues 160–240 (VSVNSGGNSS…GGGGGGRDEK (81 aa)) is disordered. Over residues 172 to 186 (SNNDDRYGRGRDDFR) the composition is skewed to basic and acidic residues. Residues 197–214 (NGGGGGSDFRGDNNGYGG) show a composition bias toward gly residues. S221 bears the Phosphoserine mark. At T244 the chain carries Phosphothreonine. Positions 376–389 (RAKRGKSPERKEIE) are enriched in basic and acidic residues. The tract at residues 376–431 (RAKRGKSPERKEIEAPPPVVEEEEPEPDMNEIKALPPPENYTPPPPPEPEPQPEKP) is disordered. The segment covering 395–404 (VEEEEPEPDM) has biased composition (acidic residues). Residues 410–425 (LPPPENYTPPPPPEPE) show a composition bias toward pro residues.

Its subcellular location is the membrane. The protein resides in the clathrin-coated pit. It localises to the golgi apparatus. It is found in the cytoplasmic vesicle. The protein localises to the clathrin-coated vesicle. The chain is Putative clathrin assembly protein At2g25430 from Arabidopsis thaliana (Mouse-ear cress).